A 113-amino-acid chain; its full sequence is Large ribosomal subunit protein uL22 (113 aa).

It belongs to the universal ribosomal protein uL22 family. In terms of assembly, part of the 50S ribosomal subunit.

In terms of biological role, this protein binds specifically to 23S rRNA; its binding is stimulated by other ribosomal proteins, e.g. L4, L17, and L20. It is important during the early stages of 50S assembly. It makes multiple contacts with different domains of the 23S rRNA in the assembled 50S subunit and ribosome. Its function is as follows. The globular domain of the protein is located near the polypeptide exit tunnel on the outside of the subunit, while an extended beta-hairpin is found that lines the wall of the exit tunnel in the center of the 70S ribosome. This chain is Large ribosomal subunit protein uL22, found in Opitutus terrae (strain DSM 11246 / JCM 15787 / PB90-1).